The following is a 220-amino-acid chain: Claudin-6 (220 aa).

The Cytoplasmic segment spans residues M1–Q7. The chain crosses the membrane as a helical span at residues I8–P28. Residues M29–R81 lie on the Extracellular side of the membrane. A helical transmembrane segment spans residues A82–A102. The Cytoplasmic portion of the chain corresponds to K103–R116. Residues L117–C137 form a helical membrane-spanning segment. Residues W138–L160 are Extracellular-facing. Residues G161–L181 traverse the membrane as a helical segment. The Cytoplasmic segment spans residues C182–V220. A phosphoserine mark is found at S201, S203, S208, and S212. Residues Y219–V220 form an interactions with TJP1, TJP2 and TJP3 region.

The protein belongs to the claudin family. In terms of assembly, directly interacts with TJP1/ZO-1, TJP2/ZO-2 and TJP3/ZO-3. Interacts with CLDN1, CD81 and OCLN. As to expression, expressed in the liver, in peripheral blood mononuclear cells and hepatocarcinoma cell lines.

Its subcellular location is the cell junction. The protein localises to the tight junction. It is found in the cell membrane. Its function is as follows. Plays a major role in tight junction-specific obliteration of the intercellular space. In terms of biological role, (Microbial infection) Acts as a receptor for hepatitis C virus (HCV) entry into hepatic cells. In Homo sapiens (Human), this protein is Claudin-6 (CLDN6).